A 64-amino-acid polypeptide reads, in one-letter code: DNA gyrase inhibitor YacG (64 aa).

Zn(2+) is bound by residues C9, C12, C28, and C32. The interval 45 to 64 (KRIPSSGDLSESDDWSEEPK) is disordered. Acidic residues predominate over residues 54–64 (SESDDWSEEPK).

Belongs to the DNA gyrase inhibitor YacG family. In terms of assembly, interacts with GyrB. Zn(2+) is required as a cofactor.

Inhibits all the catalytic activities of DNA gyrase by preventing its interaction with DNA. Acts by binding directly to the C-terminal domain of GyrB, which probably disrupts DNA binding by the gyrase. The sequence is that of DNA gyrase inhibitor YacG from Escherichia fergusonii (strain ATCC 35469 / DSM 13698 / CCUG 18766 / IAM 14443 / JCM 21226 / LMG 7866 / NBRC 102419 / NCTC 12128 / CDC 0568-73).